The chain runs to 468 residues: uncharacterized protein (468 aa).

Residues 447 to 468 are disordered; that stretch reads AVHVSNGDKPKVALPDTQLGSH.

It belongs to the mycobacterial PPE family.

This is an uncharacterized protein from Mycobacterium tuberculosis (strain CDC 1551 / Oshkosh).